The primary structure comprises 113 residues: UPF0102 protein Dgeo_1894 (113 aa).

This sequence belongs to the UPF0102 family.

This chain is UPF0102 protein Dgeo_1894, found in Deinococcus geothermalis (strain DSM 11300 / CIP 105573 / AG-3a).